The following is a 472-amino-acid chain: Uronate isomerase (472 aa).

This sequence belongs to the metallo-dependent hydrolases superfamily. Uronate isomerase family.

It catalyses the reaction D-glucuronate = D-fructuronate. The enzyme catalyses aldehydo-D-galacturonate = keto-D-tagaturonate. Its pathway is carbohydrate metabolism; pentose and glucuronate interconversion. In Xanthomonas axonopodis pv. citri (strain 306), this protein is Uronate isomerase.